We begin with the raw amino-acid sequence, 754 residues long: DNA N-6-adenine-methyltransferase (754 aa).

Positions 4–469 constitute an SAM-dependent MTase C5-type domain; sequence LCYGSVCSGI…DRITKAVCRQ (466 aa). The active site involves Cys-78.

The protein belongs to the class I-like SAM-binding methyltransferase superfamily. C5-methyltransferase family. In terms of assembly, homodimer. The cofactor is Mg(2+). Ca(2+) is required as a cofactor.

The catalysed reaction is a 2'-deoxyadenosine in DNA + S-adenosyl-L-methionine = an N(6)-methyl-2'-deoxyadenosine in DNA + S-adenosyl-L-homocysteine + H(+). Its function is as follows. Methyltransferase that methylates adenine residues in the ssDNA and dsDNA sequence 5'-AGACC-3'. Essential for genome packaging because methylation within the pac site makes the latter cleavable. May prevent degradation of viral DNA by the host restriction-modification antiviral defense system. The protein is DNA N-6-adenine-methyltransferase (dmt) of Enterobacteriaceae (Bacteriophage P1).